A 498-amino-acid polypeptide reads, in one-letter code: Isoflavone 2'-hydroxylase (498 aa).

A helical membrane pass occupies residues 3-23 (ILSYLCYSLFYLSIFFIIRLL). Cys-436 contributes to the heme binding site.

The protein belongs to the cytochrome P450 family. Heme is required as a cofactor. Expressed constitutively in roots, but present at very low levels in uninfected stems and leaves.

The protein localises to the endoplasmic reticulum membrane. The enzyme catalyses formononetin + reduced [NADPH--hemoprotein reductase] + O2 = 2'-hydroxyformononetin + oxidized [NADPH--hemoprotein reductase] + H2O + H(+). In terms of biological role, involved in the biosynthesis of the pterocarpin phytoalexins. Acts on isoflavones with a 4'-methoxy group on the B-ring, such as formononetin and biochanin A, and on pseudobaptigenin. Has a low activity with daidzein and genistein and no activity with the 7-O-methylated isoflavonoids isoformononetin and prunetin. In Medicago truncatula (Barrel medic), this protein is Isoflavone 2'-hydroxylase.